The following is a 1133-amino-acid chain: Envelopment polyprotein (1133 aa).

A signal peptide spans 1–16 (MWSLLLLAALVGQGFA). Residues 17–484 (LKNVFDMRIQ…PGFHGWATAA (468 aa)) lie on the Lumenal side of the membrane. 10 disulfides stabilise this stretch: Cys61–Cys155, Cys107–Cys126, Cys131–Cys136, Cys173–Cys183, Cys208–Cys245, Cys232–Cys349, Cys374–Cys433, Cys378–Cys387, Cys403–Cys422, and Cys450–Cys473. N-linked (GlcNAc...) asparagine; by host glycosylation occurs at Asn132. N-linked (GlcNAc...) asparagine; by host glycans are attached at residues Asn233 and Asn345. Asn397 is a glycosylation site (N-linked (GlcNAc...) asparagine; by host). Residues 485 to 504 (LLITFCFGWVLIPACTLAIL) form a helical membrane-spanning segment. Residues 505–626 (LVLKFFANIL…NLFRYKSRCY (122 aa)) lie on the Cytoplasmic side of the membrane. The tract at residues 514–531 (LHTSNQENRFKAILRKIK) is binding to the ribonucleoprotein. 2 CCHC-type zinc fingers span residues 543-563 (CEIC…NLSC) and 568-589 (CPYC…YKVC). Binding to the ribonucleoprotein stretches follow at residues 586–603 (YKVC…KKTV), 590–601 (QATHRFREDLKK), and 609–623 (GPGC…RYKS). Residues 609–632 (GPGCYRTLNLFRYKSRCYILTMWT) form the ITAM domain. The YxxL signature appears at 613 to 616 (YRTL). The chain crosses the membrane as a helical span at residues 627–647 (ILTMWTLLLIIESILWAASAA). The Lumenal portion of the chain corresponds to 648-1105 (EIPLVPLWTD…VMGIINGNWV (458 aa)). Disulfide bonds link Cys733–Cys768, Cys737–Cys775, Cys749–Cys883, Cys763–Cys894, Cys778–Cys902, Cys804–Cys813, Cys821–Cys830, and Cys861–Cys865. Positions 755–775 (YEYENSWACNPPDCPGVGTGC) are fusion loop. N-linked (GlcNAc...) asparagine; by host glycosylation occurs at Asn926. 5 disulfides stabilise this stretch: Cys968–Cys998, Cys991–Cys1043, Cys1008–Cys1013, Cys1044–Cys1049, and Cys1083–Cys1087. The chain crosses the membrane as a helical span at residues 1106-1125 (VLIVLCVLLLFSLILLSILC). The binding to the ribonucleoprotein stretch occupies residues 1120–1133 (LLSILCPVRKHKKS). The Cytoplasmic segment spans residues 1126–1133 (PVRKHKKS).

It belongs to the hantavirus envelope glycoprotein family. As to quaternary structure, homodimer. Homotetramer; forms heterotetrameric Gn-Gc spikes in the pre-fusion conformation. Interacts (via C-terminus) with the nucleoprotein. Interacts with host TUFM; this interaction contributes to the virus-induced degradation of mitochondria by autophagy, which leads to degradation of host MAVS and inhibition of type I interferon (IFN) responses. Interacts with host MAP1LC3B; this interaction contributes to the virus-induced degradation of mitochondria by autophagy, which leads to degradation of host MAVS and inhibition of type I interferon (IFN) responses. In terms of assembly, homodimer. Homotetramer; forms heterotetrameric Gn-Gc spikes in the pre-fusion conformation. Homotrimer; forms homotrimer in the post-fusion conformation at acidic pH. Interacts (via C-terminus) with the nucleoprotein. Post-translationally, envelope polyprotein precursor is quickly cleaved in vivo just after synthesis, presumably by host signal peptidase.

The protein localises to the virion membrane. It is found in the host cell surface. It localises to the host Golgi apparatus membrane. Its subcellular location is the host endoplasmic reticulum membrane. The protein resides in the host mitochondrion. Forms homotetramers with glycoprotein C at the surface of the virion. Attaches the virion to host cell receptors including integrin ITGAV/ITGB3. This attachment induces virion internalization predominantly through clathrin-dependent endocytosis. Mediates the assembly and budding of infectious virus particles through its interaction with the nucleocapsid protein and the viral genome. May dysregulate normal immune and endothelial cell responses through an ITAM motif. Translocates to mitochondria, binds to host TUFM and recruits MAP1LC3B. These interactions induce mitochondrial autophagy and therefore destruction of host MAVS leading to inhibition of type I interferon (IFN) responses. Concomitant breakdown of glycoprotein N is apparently prevented by the nucleoprotein that may inhibit Gn-stimulated autophagosome-lysosome fusion. Interacts with the viral genomic RNA. Its function is as follows. Forms homotetramers with glycoprotein N at the surface of the virion. Attaches the virion to host cell receptors including integrin ITGAV/ITGB3. This attachment induces virion internalization predominantly through clathrin-dependent endocytosis. Class II fusion protein that promotes fusion of viral membrane with host endosomal membrane after endocytosis of the virion. The polypeptide is Envelopment polyprotein (GP) (Homo sapiens (Human)).